Here is a 474-residue protein sequence, read N- to C-terminus: uncharacterized protein (474 aa).

Residues 3-23 (LTLWLVLGAVGVGAVGTGVGF) traverse the membrane as a helical segment. The disordered stretch occupies residues 171-296 (VSDGSSSKTR…KETKDRTKVD (126 aa)). Residues 180–210 (RTPKKTKTSKKKPIKKKSSKSKSSKGSKKQK) are compositionally biased toward basic residues. Residues 231–253 (TRSQSKQQKGQEQATDQTDSEGV) are compositionally biased toward polar residues. Positions 257–266 (EGADNTDTEL) are enriched in acidic residues. Low complexity predominate over residues 267 to 281 (VETTAETTEQEATTK). The span at 282-296 (STKDTKETKDRTKVD) shows a compositional bias: basic and acidic residues.

The protein resides in the membrane. This is an uncharacterized protein from Mycoplasma pneumoniae (strain ATCC 29342 / M129 / Subtype 1) (Mycoplasmoides pneumoniae).